We begin with the raw amino-acid sequence, 379 residues long: Succinyl-diaminopimelate desuccinylase (379 aa).

His-70 contacts Zn(2+). Residue Asp-72 is part of the active site. Asp-103 provides a ligand contact to Zn(2+). Glu-137 serves as the catalytic Proton acceptor. Residues Glu-138, Glu-166, and His-352 each contribute to the Zn(2+) site.

Belongs to the peptidase M20A family. DapE subfamily. Homodimer. Zn(2+) is required as a cofactor. Requires Co(2+) as cofactor.

The catalysed reaction is N-succinyl-(2S,6S)-2,6-diaminopimelate + H2O = (2S,6S)-2,6-diaminopimelate + succinate. Its pathway is amino-acid biosynthesis; L-lysine biosynthesis via DAP pathway; LL-2,6-diaminopimelate from (S)-tetrahydrodipicolinate (succinylase route): step 3/3. Its function is as follows. Catalyzes the hydrolysis of N-succinyl-L,L-diaminopimelic acid (SDAP), forming succinate and LL-2,6-diaminopimelate (DAP), an intermediate involved in the bacterial biosynthesis of lysine and meso-diaminopimelic acid, an essential component of bacterial cell walls. The sequence is that of Succinyl-diaminopimelate desuccinylase from Burkholderia vietnamiensis (strain G4 / LMG 22486) (Burkholderia cepacia (strain R1808)).